Reading from the N-terminus, the 509-residue chain is Dihydrolipoyl dehydrogenase, mitochondrial (509 aa).

A mitochondrion-targeting transit peptide spans 1-35 (MQSWSRVYCSLAKRGHFNRISHGLQGLSAVPLRTY). Lys-66 is subject to N6-acetyllysine; alternate. An N6-succinyllysine; alternate modification is found at Lys-66. FAD-binding positions include 71–80 (EKNETLGGTC) and Lys-89. An intrachain disulfide couples Cys-80 to Cys-85. Lys-104, Lys-122, Lys-132, and Lys-143 each carry N6-acetyllysine; alternate. 4 positions are modified to N6-succinyllysine; alternate: Lys-104, Lys-122, Lys-132, and Lys-143. Gly-154 is an FAD binding site. Residues Lys-159 and Lys-166 each carry the N6-succinyllysine modification. 183–185 (TGS) provides a ligand contact to FAD. NAD(+)-binding positions include 220 to 227 (GAGVIGVE) and Glu-243. 2 positions are modified to N6-succinyllysine: Lys-273 and Lys-277. Val-278 contributes to the NAD(+) binding site. A phosphoserine mark is found at Ser-285 and Ser-297. Gly-314 provides a ligand contact to NAD(+). The residue at position 346 (Lys-346) is an N6-acetyllysine. Residues Asp-355 and 361–364 (MLAH) contribute to the FAD site. Position 410 is an N6-acetyllysine; alternate (Lys-410). The residue at position 410 (Lys-410) is an N6-succinyllysine; alternate. Residues Lys-417 and Lys-420 each carry the N6-acetyllysine modification. Lys-430 carries the N6-succinyllysine modification. His-487 (proton acceptor) is an active-site residue. Ser-502 carries the phosphoserine modification. Lys-505 bears the N6-acetyllysine; alternate mark. Lys-505 carries the post-translational modification N6-succinyllysine; alternate.

The protein belongs to the class-I pyridine nucleotide-disulfide oxidoreductase family. In terms of assembly, homodimer. Part of the multimeric pyruvate dehydrogenase complex that contains multiple copies of pyruvate dehydrogenase (subunits PDHA (PDHA1 or PDHA2) and PDHB, E1), dihydrolipoamide acetyltransferase (DLAT, E2) and lipoamide dehydrogenase (DLD, E3). These subunits are bound to an inner core composed of about 48 DLAT and 12 PDHX molecules (by non covalent bonds). The 2-oxoglutarate dehydrogenase complex is composed of OGDH (2-oxoglutarate dehydrogenase; E1), DLST (dihydrolipoamide succinyltransferase; E2), DLD (dihydrolipoamide dehydrogenase; E3) and the assembly factor KGD4. It contains multiple copies of the three enzymatic components (E1, E2 and E3). In the nucleus, the 2-oxoglutarate dehydrogenase complex associates with KAT2A. Interacts with PDHX. Requires FAD as cofactor. Tyrosine phosphorylated.

It is found in the mitochondrion matrix. It localises to the nucleus. The protein resides in the cell projection. Its subcellular location is the cilium. The protein localises to the flagellum. It is found in the cytoplasmic vesicle. It localises to the secretory vesicle. The protein resides in the acrosome. It catalyses the reaction N(6)-[(R)-dihydrolipoyl]-L-lysyl-[protein] + NAD(+) = N(6)-[(R)-lipoyl]-L-lysyl-[protein] + NADH + H(+). Its function is as follows. Lipoamide dehydrogenase is a component of the glycine cleavage system as well as an E3 component of three alpha-ketoacid dehydrogenase complexes (pyruvate-, alpha-ketoglutarate-, and branched-chain amino acid-dehydrogenase complex). The 2-oxoglutarate dehydrogenase complex is mainly active in the mitochondrion. A fraction of the 2-oxoglutarate dehydrogenase complex also localizes in the nucleus and is required for lysine succinylation of histones: associates with KAT2A on chromatin and provides succinyl-CoA to histone succinyltransferase KAT2A. In monomeric form may have additional moonlighting function as serine protease. Involved in the hyperactivation of spermatazoa during capacitation and in the spermatazoal acrosome reaction. The protein is Dihydrolipoyl dehydrogenase, mitochondrial (DLD) of Macaca fascicularis (Crab-eating macaque).